The chain runs to 306 residues: Non-structural protein 3 (306 aa).

This is Non-structural protein 3 (Segment-7) from Banna virus (BAV).